A 55-amino-acid polypeptide reads, in one-letter code: ATP synthase F(0) complex subunit 8 (55 aa).

The helical transmembrane segment at Phe10–Ile32 threads the bilayer.

Belongs to the ATPase protein 8 family. As to quaternary structure, component of the ATP synthase complex composed at least of ATP5F1A/subunit alpha, ATP5F1B/subunit beta, ATP5MC1/subunit c (homooctomer), MT-ATP6/subunit a, MT-ATP8/subunit 8, ATP5ME/subunit e, ATP5MF/subunit f, ATP5MG/subunit g, ATP5MK/subunit k, ATP5MJ/subunit j, ATP5F1C/subunit gamma, ATP5F1D/subunit delta, ATP5F1E/subunit epsilon, ATP5PF/subunit F6, ATP5PB/subunit b, ATP5PD/subunit d, ATP5PO/subunit OSCP. ATP synthase complex consists of a soluble F(1) head domain (subunits alpha(3) and beta(3)) - the catalytic core - and a membrane F(0) domain - the membrane proton channel (subunits c, a, 8, e, f, g, k and j). These two domains are linked by a central stalk (subunits gamma, delta, and epsilon) rotating inside the F1 region and a stationary peripheral stalk (subunits F6, b, d, and OSCP).

Its subcellular location is the mitochondrion membrane. In terms of biological role, subunit 8, of the mitochondrial membrane ATP synthase complex (F(1)F(0) ATP synthase or Complex V) that produces ATP from ADP in the presence of a proton gradient across the membrane which is generated by electron transport complexes of the respiratory chain. ATP synthase complex consist of a soluble F(1) head domain - the catalytic core - and a membrane F(1) domain - the membrane proton channel. These two domains are linked by a central stalk rotating inside the F(1) region and a stationary peripheral stalk. During catalysis, ATP synthesis in the catalytic domain of F(1) is coupled via a rotary mechanism of the central stalk subunits to proton translocation. In vivo, can only synthesize ATP although its ATP hydrolase activity can be activated artificially in vitro. Part of the complex F(0) domain. The protein is ATP synthase F(0) complex subunit 8 of Guira guira (Guira cuckoo).